The sequence spans 427 residues: Transcriptional enhancer factor TEF-3 (427 aa).

Residues 1–32 (MTSNEWSSPDSPEGSSISGGSQALDKPIDNDA) are disordered. A compositionally biased stretch (low complexity) spans 7–21 (SSPDSPEGSSISGGS). Positions 29–105 (DNDAEGVWSP…QVLARRKARE (77 aa)) form a DNA-binding region, TEA. The Nuclear localization signal signature appears at 78 to 94 (IKLRTGKTRTRKQVSSH). The interval 163–206 (QPGTSHDVKPFSQNTYPVQPPLPLPGFESPAGPTPSPSAPLAPP) is disordered. The span at 194–205 (GPTPSPSAPLAP) shows a compositional bias: pro residues.

As to quaternary structure, interacts with WWTR1/TAZ. Interacts with YAP1. In terms of tissue distribution, preferentially expressed in lung and in skeletal muscle.

It is found in the nucleus. Transcription factor which plays a key role in the Hippo signaling pathway, a pathway involved in organ size control and tumor suppression by restricting proliferation and promoting apoptosis. The core of this pathway is composed of a kinase cascade wherein MST1/MST2, in complex with its regulatory protein SAV1, phosphorylates and activates LATS1/2 in complex with its regulatory protein MOB1, which in turn phosphorylates and inactivates YAP1 oncoprotein and WWTR1/TAZ. Acts by mediating gene expression of YAP1 and WWTR1/TAZ, thereby regulating cell proliferation, migration and epithelial mesenchymal transition (EMT) induction. Binds specifically and non-cooperatively to the Sph and GT-IIC 'enhansons' (5'-GTGGAATGT-3') and activates transcription. Binds to the M-CAT motif. Might play a role in the embryonic development of skeletal muscle. This Mus musculus (Mouse) protein is Transcriptional enhancer factor TEF-3 (Tead4).